A 677-amino-acid polypeptide reads, in one-letter code: Methionine--tRNA ligase (677 aa).

The short motif at 15–25 (PYANGSIHLGH) is the 'HIGH' region element. Cys-146, Cys-149, Cys-159, and Cys-162 together coordinate Zn(2+). The 'KMSKS' region motif lies at 333–337 (KMSKS). Lys-336 is a binding site for ATP. The 103-residue stretch at 575-677 (DFAKVDLRVA…AGAKPGHQVK (103 aa)) folds into the tRNA-binding domain.

The protein belongs to the class-I aminoacyl-tRNA synthetase family. MetG type 1 subfamily. As to quaternary structure, homodimer. It depends on Zn(2+) as a cofactor.

It is found in the cytoplasm. The catalysed reaction is tRNA(Met) + L-methionine + ATP = L-methionyl-tRNA(Met) + AMP + diphosphate. Its function is as follows. Is required not only for elongation of protein synthesis but also for the initiation of all mRNA translation through initiator tRNA(fMet) aminoacylation. The chain is Methionine--tRNA ligase from Escherichia coli O17:K52:H18 (strain UMN026 / ExPEC).